A 332-amino-acid polypeptide reads, in one-letter code: Cinnamoyl-CoA reductase 2 (332 aa).

NADP(+) is bound by residues 12–18, arginine 37, lysine 43, 63–64, 83–85, tyrosine 156, lysine 160, 183–186, and serine 198; these read GAGGYIA, DL, TAS, and PVLV. A disulfide bridge links cysteine 149 with cysteine 157. The active-site Proton donor is lysine 160.

Belongs to the NAD(P)-dependent epimerase/dehydratase family. Dihydroflavonol-4-reductase subfamily. Expressed at low levels in leaves, stems and flowers.

It catalyses the reaction (E)-cinnamaldehyde + NADP(+) + CoA = (E)-cinnamoyl-CoA + NADPH + H(+). It functions in the pathway aromatic compound metabolism; phenylpropanoid biosynthesis. Its function is as follows. Cinnamoyl-CoA reductase probably involved in the formation of phenolic compounds associated with the hypersensitive response. Seems not to be involved in lignin biosynthesis. This Arabidopsis thaliana (Mouse-ear cress) protein is Cinnamoyl-CoA reductase 2 (CCR2).